A 382-amino-acid polypeptide reads, in one-letter code: Galactokinase (382 aa).

Position 34 to 37 (34 to 37) interacts with substrate; it reads EHTD. Residue 124 to 130 coordinates ATP; the sequence is GAGLSSS. Residues serine 130 and glutamate 162 each contribute to the Mg(2+) site. Aspartate 174 functions as the Proton acceptor in the catalytic mechanism. Tyrosine 223 provides a ligand contact to substrate.

This sequence belongs to the GHMP kinase family. GalK subfamily.

It is found in the cytoplasm. It catalyses the reaction alpha-D-galactose + ATP = alpha-D-galactose 1-phosphate + ADP + H(+). It functions in the pathway carbohydrate metabolism; galactose metabolism. Its function is as follows. Catalyzes the transfer of the gamma-phosphate of ATP to D-galactose to form alpha-D-galactose-1-phosphate (Gal-1-P). The protein is Galactokinase of Salmonella paratyphi A (strain ATCC 9150 / SARB42).